Here is a 550-residue protein sequence, read N- to C-terminus: MISDNLKKGVSRAPNRSLLKACGYTDEEIEKPFIGIVNSFTEVVPGHIHLNTLAEAAKKGVYANGGTPFEFNTMAVCDGIAMGHEGMRYSLPSREIIADTVESMAKAHGFDGLVLIPSCDKIVPGMIMGALRLNIPFIVITGGPMQPGELHGKKYDLISVFEGVGEYNVGKITKEELMEIETCACPGAGSCAGLFTANSMACLTETLGLSLPMCATTHATDAEKVRIAKRSGMKIVDLVKEDIKPTDLLTKESFENAILVDLALGGSSNTTLHIPALAYEIAPEFITLDDFDRLCDEVPHIASLRPGGDHFISDLHRAGGIPAVLKILEQKIRDANTVSGKSIKEIINEVKYIDYNIIRPVDKPVHETAGLRILKGNIAPDGCVVKISAVNPKMYKHEGPARVFNSEEETIDAILGGDIKEGDVVVIRYEGPAGGPGMREMLSPTSAICGMGLDDSVALITDGRFSGGSRGPCIGHISPEAMAGGPIAIIEEGDIIAIDMMAKEINLKISEEEIKERLANWKKPEIKVKKGYISRYAKLVSSANEGAVLK.

Residue aspartate 78 coordinates Mg(2+). Cysteine 119 contributes to the [2Fe-2S] cluster binding site. 2 residues coordinate Mg(2+): aspartate 120 and lysine 121. Position 121 is an N6-carboxylysine (lysine 121). Cysteine 191 contacts [2Fe-2S] cluster. Glutamate 440 contacts Mg(2+). Residue serine 466 is the Proton acceptor of the active site.

The protein belongs to the IlvD/Edd family. As to quaternary structure, homodimer. [2Fe-2S] cluster is required as a cofactor. The cofactor is Mg(2+).

The enzyme catalyses (2R)-2,3-dihydroxy-3-methylbutanoate = 3-methyl-2-oxobutanoate + H2O. It carries out the reaction (2R,3R)-2,3-dihydroxy-3-methylpentanoate = (S)-3-methyl-2-oxopentanoate + H2O. The protein operates within amino-acid biosynthesis; L-isoleucine biosynthesis; L-isoleucine from 2-oxobutanoate: step 3/4. Its pathway is amino-acid biosynthesis; L-valine biosynthesis; L-valine from pyruvate: step 3/4. Functionally, functions in the biosynthesis of branched-chain amino acids. Catalyzes the dehydration of (2R,3R)-2,3-dihydroxy-3-methylpentanoate (2,3-dihydroxy-3-methylvalerate) into 2-oxo-3-methylpentanoate (2-oxo-3-methylvalerate) and of (2R)-2,3-dihydroxy-3-methylbutanoate (2,3-dihydroxyisovalerate) into 2-oxo-3-methylbutanoate (2-oxoisovalerate), the penultimate precursor to L-isoleucine and L-valine, respectively. The chain is Dihydroxy-acid dehydratase from Methanococcus aeolicus (strain ATCC BAA-1280 / DSM 17508 / OCM 812 / Nankai-3).